The primary structure comprises 84 residues: Kidney-associated antigen 1 (84 aa).

Positions 31–84 (PGAAAAHLPRWPPPQLAASRREAPPLSQRPHRTQGAGSPPETNEKLTNPQVKEK) are disordered. Positions 75–84 (KLTNPQVKEK) are enriched in polar residues.

Expressed in testis and kidney, and, at lower levels, in urinary bladder and liver. Expressed by a high proportion of tumors of various histologic origin, including melanomas, sarcomas and colorectal carcinomas.

The chain is Kidney-associated antigen 1 (KAAG1) from Homo sapiens (Human).